We begin with the raw amino-acid sequence, 281 residues long: Putative outer membrane protein BBA52 (281 aa).

Residues 162–281 (KRISDNQSKL…FFDSLEDQFI (120 aa)) form a disordered region. Residues 179 to 196 (NKSVGSKFSKNSRPSKSP) are compositionally biased toward polar residues. Acidic residues predominate over residues 219–249 (EFLDDPSQESDELEREYQDDELESEDPDDGE). Over residues 250–262 (REYQDDRESRDDT) the composition is skewed to basic and acidic residues. Positions 263–281 (FNEDQSEDEFFDSLEDQFI) are enriched in acidic residues.

The protein resides in the cell outer membrane. In Borreliella burgdorferi (strain ATCC 35210 / DSM 4680 / CIP 102532 / B31) (Borrelia burgdorferi), this protein is Putative outer membrane protein BBA52.